We begin with the raw amino-acid sequence, 320 residues long: Arabinan endo-1,5-alpha-L-arabinosidase C (320 aa).

The N-terminal stretch at 1–15 (MKLALSLFLLSGSLA) is a signal peptide. The Proton acceptor role is filled by Asp31. N-linked (GlcNAc...) asparagine glycosylation is found at Asn126 and Asn190. Glu198 (proton donor) is an active-site residue.

It belongs to the glycosyl hydrolase 43 family.

The protein localises to the secreted. The catalysed reaction is Endohydrolysis of (1-&gt;5)-alpha-arabinofuranosidic linkages in (1-&gt;5)-arabinans.. It functions in the pathway glycan metabolism; L-arabinan degradation. Its function is as follows. Endo-1,5-alpha-L-arabinanase involved in degradation of pectin. Its preferred substrate is linear 1,5-alpha-L-arabinan. The polypeptide is Arabinan endo-1,5-alpha-L-arabinosidase C (abnC) (Emericella nidulans (strain FGSC A4 / ATCC 38163 / CBS 112.46 / NRRL 194 / M139) (Aspergillus nidulans)).